The chain runs to 435 residues: Tol-Pal system protein TolB (435 aa).

The signal sequence occupies residues 1 to 26 (MKIFSPIRLVLAIAALMSVFSAPAFA).

Belongs to the TolB family. In terms of assembly, the Tol-Pal system is composed of five core proteins: the inner membrane proteins TolA, TolQ and TolR, the periplasmic protein TolB and the outer membrane protein Pal. They form a network linking the inner and outer membranes and the peptidoglycan layer.

Its subcellular location is the periplasm. Its function is as follows. Part of the Tol-Pal system, which plays a role in outer membrane invagination during cell division and is important for maintaining outer membrane integrity. This chain is Tol-Pal system protein TolB, found in Agrobacterium fabrum (strain C58 / ATCC 33970) (Agrobacterium tumefaciens (strain C58)).